A 494-amino-acid chain; its full sequence is Maintenance of mitochondrial morphology protein 1 (494 aa).

The Lumenal portion of the chain corresponds to 1-25 (MGDDQSLRSTVAENDISANLSFTQG). A helical transmembrane segment spans residues 26–46 (FLLGQLSVVLLIGAFIKFFIF). Over 47–494 (GEAPPPPSRG…GTLPGGAAAN (448 aa)) the chain is Cytoplasmic. Disordered stretches follow at residues 53 to 99 (PSRG…VPSS), 278 to 330 (PPLH…KSNV), and 395 to 494 (RTGV…AAAN). A compositionally biased stretch (basic residues) spans 57–67 (LSHRASTHRRS). Polar residues-rich tracts occupy residues 68 to 81 (NSIY…GTSR) and 88 to 99 (STSNVLRPVPSS). The SMP-LTD domain maps to 134–387 (QPESLDWFNV…EPRVQVVGLP (254 aa)). A compositionally biased stretch (pro residues) spans 278–290 (PPLHTPSPSPSPP). Polar residues-rich tracts occupy residues 300-318 (THPT…NAQE) and 406-415 (TGSNAASRSA). Basic and acidic residues predominate over residues 425–437 (RADDIGREPDGLR).

It belongs to the MMM1 family. As to quaternary structure, homodimer. Component of the ER-mitochondria encounter structure (ERMES) or MDM complex, composed of mmm1, mdm10, mdm12 and mdm34. A mmm1 homodimer associates with one molecule of mdm12 on each side in a pairwise head-to-tail manner, and the SMP-LTD domains of mmm1 and mdm12 generate a continuous hydrophobic tunnel for phospholipid trafficking.

The protein localises to the endoplasmic reticulum membrane. In terms of biological role, component of the ERMES/MDM complex, which serves as a molecular tether to connect the endoplasmic reticulum (ER) and mitochondria. Components of this complex are involved in the control of mitochondrial shape and protein biogenesis, and function in nonvesicular lipid trafficking between the ER and mitochondria. The mdm12-mmm1 subcomplex functions in the major beta-barrel assembly pathway that is responsible for biogenesis of all outer membrane beta-barrel proteins, and acts in a late step after the SAM complex. The mdm10-mdm12-mmm1 subcomplex further acts in the TOM40-specific pathway after the action of the mdm12-mmm1 complex. Essential for establishing and maintaining the structure of mitochondria and maintenance of mtDNA nucleoids. This chain is Maintenance of mitochondrial morphology protein 1, found in Aspergillus oryzae (strain ATCC 42149 / RIB 40) (Yellow koji mold).